Consider the following 239-residue polypeptide: Probable transcriptional regulatory protein ACL_0044 (239 aa).

It belongs to the TACO1 family.

Its subcellular location is the cytoplasm. This chain is Probable transcriptional regulatory protein ACL_0044, found in Acholeplasma laidlawii (strain PG-8A).